Reading from the N-terminus, the 352-residue chain is C-C chemokine receptor type 5 (352 aa).

The Extracellular segment spans residues 1–30; the sequence is MDYSMSTALYDIDYGMSEPCQKIDVKQVAA. The residue at position 3 (Tyr3) is a Sulfotyrosine. Residue Ser6 is glycosylated (O-linked (GalNAc...) serine). A sulfotyrosine mark is found at Tyr10 and Tyr14. An O-linked (GalNAc...) serine glycan is attached at Ser17. Disulfide bonds link Cys20–Cys269 and Cys101–Cys178. A helical membrane pass occupies residues 31–58; the sequence is RLLPPLYSLVFIFGFVGNLLVVLILITC. The Cytoplasmic segment spans residues 59-68; that stretch reads KKLKSMTDIY. Residues 69-89 traverse the membrane as a helical segment; that stretch reads LLNLAISDLLFLLTLPLWAHY. Residues 90–102 lie on the Extracellular side of the membrane; sequence AAAEWDFGGAMCK. The chain crosses the membrane as a helical span at residues 103-124; the sequence is VFTGMYHMGYFGGIFFIILLTI. Over 125-141 the chain is Cytoplasmic; the sequence is DRYLAIVHAVFALKART. The chain crosses the membrane as a helical span at residues 142 to 166; that stretch reads VTFGVVTSGVTWVAAILVSLPDIIF. The Extracellular portion of the chain corresponds to 167–198; sequence TRSQKEGFRCSCSPHFPASQYQFWKNFHTIMR. The helical transmembrane segment at 199–218 threads the bilayer; that stretch reads NILSLVLPLLVMIVCYSGIL. The Cytoplasmic portion of the chain corresponds to 219–235; the sequence is KTLLRCRNEKRRHRAVR. A helical membrane pass occupies residues 236–260; it reads LIFAIMVVYFLFWAPYNVVLLLNTF. At 261–277 the chain is on the extracellular side; it reads QEFFGLNNCSSSNRLDR. Residues 278–301 form a helical membrane-spanning segment; the sequence is AMQVTETLGMTHCCINPVVYAFVG. The Cytoplasmic portion of the chain corresponds to 302–352; sequence EKFRSYLSAFFRKHVAKRLCKHCPLLPRETPEPASSVYTRSTGEQEISVGL. 2 S-palmitoyl cysteine lipidation sites follow: Cys321 and Cys324. The segment at 332–352 is disordered; that stretch reads PEPASSVYTRSTGEQEISVGL. Phosphoserine; by BARK1 occurs at positions 336, 337, 342, and 349. Residues 337-346 show a composition bias toward polar residues; it reads SVYTRSTGEQ.

Belongs to the G-protein coupled receptor 1 family. Interacts with PRAF2. Efficient ligand binding to CCL3/MIP-1alpha and CCL4/MIP-1beta requires sulfation, O-glycosylation and sialic acid modifications. Glycosylation on Ser-6 is required for efficient binding of CCL4. Interacts with GRK2. Interacts with ARRB1 and ARRB2. Interacts with CNIH4. Interacts with S100A4; this interaction stimulates T-lymphocyte chemotaxis. In terms of processing, sulfated on at least 2 of the N-terminal tyrosines. Sulfation is required for efficient binding of the chemokines, CCL3 and CCL4. Post-translationally, O-glycosylated, but not N-glycosylated. Ser-6 appears to be the major site. Also sialylated glycans present which contribute to chemokine binding. Ser-17 may also be glycosylated and, if so, with small moieties such as a T-antigen. Palmitoylation in the C-terminal is important for cell surface expression. In terms of processing, phosphorylation on serine residues in the C-terminal is stimulated by binding CC chemokines especially by APO-RANTES.

The protein resides in the cell membrane. In terms of biological role, receptor for a number of inflammatory CC-chemokines including CCL3/MIP-1-alpha, CCL4/MIP-1-beta and RANTES and subsequently transduces a signal by increasing the intracellular calcium ion level. May play a role in the control of granulocytic lineage proliferation or differentiation. Participates in T-lymphocyte migration to the infection site by acting as a chemotactic receptor. The polypeptide is C-C chemokine receptor type 5 (CCR5) (Oryctolagus cuniculus (Rabbit)).